We begin with the raw amino-acid sequence, 348 residues long: Uroporphyrinogen decarboxylase (348 aa).

Substrate is bound by residues 27-31 (RQAGR), F46, D76, Y152, S207, and H320.

The protein belongs to the uroporphyrinogen decarboxylase family. In terms of assembly, homodimer.

It is found in the cytoplasm. It catalyses the reaction uroporphyrinogen III + 4 H(+) = coproporphyrinogen III + 4 CO2. It functions in the pathway porphyrin-containing compound metabolism; protoporphyrin-IX biosynthesis; coproporphyrinogen-III from 5-aminolevulinate: step 4/4. Functionally, catalyzes the decarboxylation of four acetate groups of uroporphyrinogen-III to yield coproporphyrinogen-III. This Bacillus thuringiensis (strain Al Hakam) protein is Uroporphyrinogen decarboxylase.